The primary structure comprises 367 residues: Alginate lyase (367 aa).

The first 24 residues, 1 to 24, serve as a signal peptide directing secretion; that stretch reads MTLLKRISSPALLALALFGGAAHA. Substrate-binding positions include 63-64, 136-137, and Tyr254; these read SK and HT.

This sequence belongs to the polysaccharide lyase 5 family.

It localises to the periplasm. The enzyme catalyses Eliminative cleavage of alginate to give oligosaccharides with 4-deoxy-alpha-L-erythro-hex-4-enuronosyl groups at their non-reducing ends and beta-D-mannuronate at their reducing end.. Functionally, catalyzes the depolymerization of alginate by cleaving the beta-1,4 glycosidic bond between two adjacent sugar residues via a beta-elimination mechanism. May serve to degrade mislocalized alginate that is trapped in the periplasmic space. The chain is Alginate lyase from Pseudomonas putida (strain GB-1).